We begin with the raw amino-acid sequence, 83 residues long: Small ribosomal subunit protein bS16 (83 aa).

Belongs to the bacterial ribosomal protein bS16 family.

In Chromobacterium violaceum (strain ATCC 12472 / DSM 30191 / JCM 1249 / CCUG 213 / NBRC 12614 / NCIMB 9131 / NCTC 9757 / MK), this protein is Small ribosomal subunit protein bS16.